The primary structure comprises 894 residues: GTPase-activating protein GYP5 (894 aa).

The segment covering 1 to 23 has biased composition (basic and acidic residues); the sequence is MSSDKSIEKNTDTIASEVHEGDN. The disordered stretch occupies residues 1–324; sequence MSSDKSIEKN…VPPPLEEEMK (324 aa). 2 positions are modified to phosphoserine: S25 and S30. Residue T89 is modified to Phosphothreonine. Residues 134 to 164 are compositionally biased toward basic and acidic residues; sequence IEKEYDAVKENEKVYADTKEVVSSPENREVT. Polar residues-rich tracts occupy residues 184–200 and 268–279; these read GTTTAANANDISISSEV and SSENEVSAIPTT. Phosphoserine is present on S389. The region spanning 451–630 is the Rab-GAP TBC domain; sequence GIPPQIRGII…RIFDIVFVEG (180 aa). The stretch at 732–872 forms a coiled coil; that stretch reads EKEQKKEDHY…INKEQVSTAS (141 aa).

This sequence belongs to the GYP5 family. As to quaternary structure, interacts with GYL1 and RVS167; and is part of SEC4-containing complexes.

The protein localises to the cytoplasm. The protein resides in the bud. Its subcellular location is the bud neck. GTPase-activating protein which accelerates the GTP hydrolysis rate of YPT1 and SEC4. Involved in ER to Golgi trafficking and polarized exocytosis. This is GTPase-activating protein GYP5 (GYP5) from Saccharomyces cerevisiae (strain ATCC 204508 / S288c) (Baker's yeast).